Reading from the N-terminus, the 51-residue chain is DNA-directed RNA polymerases II, IV and V subunit 12 (51 aa).

The Zn(2+) site is built by Cys12, Cys15, Cys29, and Cys32.

This sequence belongs to the archaeal Rpo12/eukaryotic RPC10 RNA polymerase subunit family. As to quaternary structure, component of the RNA polymerase II, IV and V complexes. Associates with the mediator complex. Interacts with NRPD1.

The protein localises to the nucleus. In terms of biological role, DNA-dependent RNA polymerase catalyzes the transcription of DNA into RNA using the four ribonucleoside triphosphates as substrates. Component of RNA polymerase II which synthesizes mRNA precursors and many functional non-coding RNAs. Pol II is the central component of the basal RNA polymerase II transcription machinery. It is composed of mobile elements that move relative to each other. Component of RNA polymerases IV and V which mediate short-interfering RNAs (siRNA) accumulation and subsequent RNA-directed DNA methylation-dependent (RdDM) transcriptional gene silencing (TGS) of endogenous repeated sequences, including transposable elements. The sequence is that of DNA-directed RNA polymerases II, IV and V subunit 12 (NRPB12) from Arabidopsis thaliana (Mouse-ear cress).